The chain runs to 280 residues: Fasciclin-like arabinogalactan protein 3 (280 aa).

Positions 1 to 24 are cleaved as a signal peptide; the sequence is MGLKVSSSLLCLTILLAVSSIVSA. An FAS1 domain is found at 25–169; sequence VNITRVLEKY…LSVVQISMPI (145 aa). Residues N26, N126, and N159 are each glycosylated (N-linked (GlcNAc...) asparagine). Residues 180–193 are compositionally biased toward pro residues; sequence VPPPPPMSSPPAPS. The segment at 180–262 is disordered; sequence VPPPPPMSSP…EPPSSASNTG (83 aa). A compositionally biased stretch (low complexity) spans 219-234; sequence APETAPASAPSESDSP. Residue S256 is the site of GPI-anchor amidated serine attachment. Residues 257–280 constitute a propeptide, removed in mature form; the sequence is SASNTGLSFGAVLVLGFVASFVGF.

It belongs to the fasciclin-like AGP family.

Its subcellular location is the cell membrane. Its function is as follows. May be a cell surface adhesion protein. The chain is Fasciclin-like arabinogalactan protein 3 (FLA3) from Arabidopsis thaliana (Mouse-ear cress).